The sequence spans 341 residues: Uroporphyrinogen decarboxylase (341 aa).

Substrate is bound by residues 23-27 (RQAGR), F42, D73, Y148, S203, and H318.

The protein belongs to the uroporphyrinogen decarboxylase family. Homodimer.

It is found in the cytoplasm. The catalysed reaction is uroporphyrinogen III + 4 H(+) = coproporphyrinogen III + 4 CO2. The protein operates within porphyrin-containing compound metabolism; protoporphyrin-IX biosynthesis; coproporphyrinogen-III from 5-aminolevulinate: step 4/4. Its function is as follows. Catalyzes the decarboxylation of four acetate groups of uroporphyrinogen-III to yield coproporphyrinogen-III. This chain is Uroporphyrinogen decarboxylase, found in Brucella melitensis biotype 1 (strain ATCC 23456 / CCUG 17765 / NCTC 10094 / 16M).